Here is a 189-residue protein sequence, read N- to C-terminus: Elongation factor P (189 aa).

It belongs to the elongation factor P family.

The protein localises to the cytoplasm. Its pathway is protein biosynthesis; polypeptide chain elongation. Involved in peptide bond synthesis. Stimulates efficient translation and peptide-bond synthesis on native or reconstituted 70S ribosomes in vitro. Probably functions indirectly by altering the affinity of the ribosome for aminoacyl-tRNA, thus increasing their reactivity as acceptors for peptidyl transferase. In Orientia tsutsugamushi (strain Boryong) (Rickettsia tsutsugamushi), this protein is Elongation factor P.